We begin with the raw amino-acid sequence, 476 residues long: Proline--tRNA ligase (476 aa).

Belongs to the class-II aminoacyl-tRNA synthetase family. ProS type 3 subfamily. As to quaternary structure, homodimer.

It localises to the cytoplasm. It catalyses the reaction tRNA(Pro) + L-proline + ATP = L-prolyl-tRNA(Pro) + AMP + diphosphate. Catalyzes the attachment of proline to tRNA(Pro) in a two-step reaction: proline is first activated by ATP to form Pro-AMP and then transferred to the acceptor end of tRNA(Pro). This is Proline--tRNA ligase from Cenarchaeum symbiosum (strain A).